The sequence spans 239 residues: Ribose-5-phosphate isomerase A (239 aa).

Residues 40–43 (SGST), 96–99 (DGAD), and 110–113 (KGGG) each bind substrate. Glu-119 (proton acceptor) is an active-site residue. Lys-137 contacts substrate.

It belongs to the ribose 5-phosphate isomerase family. As to quaternary structure, homodimer.

It catalyses the reaction aldehydo-D-ribose 5-phosphate = D-ribulose 5-phosphate. Its pathway is carbohydrate degradation; pentose phosphate pathway; D-ribose 5-phosphate from D-ribulose 5-phosphate (non-oxidative stage): step 1/1. Its function is as follows. Catalyzes the reversible conversion of ribose-5-phosphate to ribulose 5-phosphate. The polypeptide is Ribose-5-phosphate isomerase A (Methanococcus maripaludis (strain C7 / ATCC BAA-1331)).